We begin with the raw amino-acid sequence, 259 residues long: MSRINITKKIYCSVFLFLFLFLSYISNYEKVNDEMYEMGEMDEIVSIVRDSMWYIPNVFMDDGKNEGHVSVNNVCHMYFTFFDVDTSSHLFKLVIKHCDLNKRGNSPLHCYTMNTRFNPSVLKILLHHGMRNFDSKDEKGHHYLIHSLSIDNKIFDILTDTIDDFSKSSDLLLCYLRYKFNGSLNYYVLYKGSDPNCADEDELTSLHYYCKHISTFYKSNYYKLSHTKMRAEKRFIYAIIDYGANINAVTHLPSTVYQT.

Belongs to the orthopoxvirus OPG003 family.

This is Truncated Ankyrin repeat protein OPG003 (OPG003) from Vaccinia virus (strain Copenhagen) (VACV).